The following is a 1810-amino-acid chain: Trinucleotide repeat-containing gene 6B protein (1810 aa).

Over residues 1–22 (MQTNEGEVEEESSSQVEQEDFV) the composition is skewed to acidic residues. 4 disordered regions span residues 1–221 (MQTN…PNPI), 235–1080 (EEWP…KKQM), 1141–1196 (MRKD…SSPG), and 1293–1329 (ALQQQQQQQQQQQRQPSMKHSPSHPVGPKPHLDNMVP). Residues 33–75 (GEESKQEKEQEREEQLMEDKKRKKEDKKKKEATQKVTEQKTKV) adopt a coiled-coil conformation. Basic and acidic residues-rich tracts occupy residues 34-52 (EESKQEKEQEREEQLMEDK) and 60-77 (KKKEATQKVTEQKTKVPE). The segment at 37–1028 (KQEKEQEREE…AMKPNSKSMQ (992 aa)) is interaction with argonaute proteins. Residues 88–106 (AASPIGSSPSPPVNGGNNA) are compositionally biased toward low complexity. Over residues 123–139 (MPREVPPRFRCQQDHKV) the composition is skewed to basic and acidic residues. The segment covering 165–174 (APGANPNNNA) has biased composition (low complexity). Residues 180–190 (LLQSESGTAPE) are compositionally biased toward polar residues. 2 stretches are compositionally biased toward low complexity: residues 207-220 (GPGASSNSGASPNP) and 248-260 (SSENTTDNNSASN). 2 stretches are compositionally biased toward polar residues: residues 261–290 (PGSEKSSLPGSTTSNKGKGSQCQAASSGNE) and 306–327 (QPPNSTSDSNNGLGNWRSTSGQ). Composition is skewed to low complexity over residues 335–346 (GFSNFNPNSNPS), 363–380 (ETESSSSSAQVSTVGQAS), and 416–425 (NSLNLSSPNP). Polar residues predominate over residues 438–451 (GNTSRSTDAPSQST). Low complexity predominate over residues 475 to 486 (SGQSNSGNNGNN). Composition is skewed to polar residues over residues 504-528 (GSKSDSWDNNNRSTGGSWNFGPQDN), 564-575 (GPNQPNSSTGAW), 611-623 (TGSNHKAGSSDSH), and 655-667 (LSNTGWGQTQIKQ). A compositionally biased stretch (basic and acidic residues) spans 675–688 (EVPRPEGKSDKGTE). Polar residues-rich tracts occupy residues 774-783 (QPNQGWTSGK) and 793-804 (VKNNNWESSANK). The segment covering 809–824 (WGEGGQNEIGTWGNGG) has biased composition (gly residues). The segment covering 846-857 (TGRQPNSWNKQH) has biased composition (polar residues). Position 913 is a phosphoserine (serine 913). Polar residues-rich tracts occupy residues 934–950 (NSYNYKNVNLWDKNSQG), 964–975 (TGKSASVWSKST), 1004–1027 (ASTTGWGNTPANAPNAMKPNSKSM), 1057–1072 (TAGSQGSTSSHNSASW), and 1175–1195 (GNSTAQSRGLHTPVQPLSSSP). Positions 1191-1700 (LSSSPGLRAQ…LAEFATEDEV (510 aa)) are silencing domain; interaction with CNOT1 and PAN3. A compositionally biased stretch (low complexity) spans 1295–1307 (QQQQQQQQQQQRQ). Serine 1409 carries the post-translational modification Phosphoserine. Residue threonine 1426 is modified to Phosphothreonine. Serine 1438 is modified (phosphoserine). Threonine 1441 is subject to Phosphothreonine. The interval 1449–1467 (SNASWPPEFQPGVPWKGIQ) is PABPC1-interacting motif-2 (PAM2). The segment at 1568-1619 (SSRNTTPLTRPPPGLTNPKPASPWSSTAPRSVRGWGTQDSRIASASTWSDGG) is disordered. Residues 1604–1617 (TQDSRIASASTWSD) are compositionally biased toward polar residues. The region spanning 1625 to 1697 (YWLVLHNLTP…TTILAEFATE (73 aa)) is the RRM domain. Disordered stretches follow at residues 1706-1740 (QAQPPTPAATPSAPATGWQSLETSQNQADPVGPAL) and 1786-1810 (EDPHRMGSPAPLLPGDLLGGGSDSI). The span at 1722–1733 (GWQSLETSQNQA) shows a compositional bias: polar residues. A compositionally biased stretch (low complexity) spans 1792–1801 (GSPAPLLPGD). 2 positions are modified to phosphoserine: serine 1793 and serine 1809.

Belongs to the GW182 family. Interacts with AGO1, AGO2, AGO3 and AGO4. Interacts with CNOT1; the interaction mediates the association with the CCR4-NOT complex. Interacts with PAN3; the interaction mediates the association with the PAN complex. Interacts with MOV10; the interaction is direct and RNA-dependent.

It is found in the cytoplasm. The protein resides in the P-body. Functionally, plays a role in RNA-mediated gene silencing by both micro-RNAs (miRNAs) and short interfering RNAs (siRNAs). Required for miRNA-dependent translational repression and siRNA-dependent endonucleolytic cleavage of complementary mRNAs by argonaute family proteins. As scaffolding protein associates with argonaute proteins bound to partially complementary mRNAs and simultaneously can recruit CCR4-NOT and PAN deadenylase complexes. The sequence is that of Trinucleotide repeat-containing gene 6B protein (Tnrc6b) from Mus musculus (Mouse).